The sequence spans 151 residues: MAQDDQEINYFVRVHNTDLDGTKPVLISLTGIKGVGRHTAKFIAETAGVEKNVLMGKLDEASVDRIREVVSNYADRIPVWMSNRPKDVYTGVKRHLLGADVTMTVDDDINLLKKIRAYRGIRHETGQKVRGQRTKSTGRTGLIVGVKRKKA.

It belongs to the universal ribosomal protein uS13 family. In terms of assembly, part of the 30S ribosomal subunit. Forms a loose heterodimer with protein S19. Forms two bridges to the 50S subunit in the 70S ribosome.

In terms of biological role, located at the top of the head of the 30S subunit, it contacts several helices of the 16S rRNA. In the 70S ribosome it contacts the 23S rRNA (bridge B1a) and protein L5 of the 50S subunit (bridge B1b), connecting the 2 subunits; these bridges are implicated in subunit movement. The protein is Small ribosomal subunit protein uS13 of Methanospirillum hungatei JF-1 (strain ATCC 27890 / DSM 864 / NBRC 100397 / JF-1).